Consider the following 374-residue polypeptide: C-X-C chemokine receptor type 5 (374 aa).

Residues 1-57 lie on the Extracellular side of the membrane; the sequence is MNYPLTLDMGSITYNMDDLYKELAFYSNSTEIPLQDSNFCSTVEGPLLTSFKAVFMP. Asn28 carries N-linked (GlcNAc...) asparagine glycosylation. The chain crosses the membrane as a helical span at residues 58-78; sequence VAYSLIFLLGMMGNILVLVIL. Topologically, residues 79–90 are cytoplasmic; that stretch reads ERHRHTRSSTET. Residues 91 to 111 form a helical membrane-spanning segment; the sequence is FLFHLAVADLLLVFILPFAVA. The Extracellular portion of the chain corresponds to 112–126; that stretch reads EGSVGWVLGTFLCKT. Cysteines 124 and 204 form a disulfide. Residues 127 to 147 form a helical membrane-spanning segment; the sequence is VIALHKINFYCSSLLLACIAV. Residues 148-169 are Cytoplasmic-facing; the sequence is DRYLAIVHAVHAYRRRRLLSIH. Residues 170–190 form a helical membrane-spanning segment; sequence ITCTAIWLAGFLFALPELLFA. Residues 191–221 are Extracellular-facing; it reads KVGQPHNNDSLPQCTFSQENEAETRAWFTSR. Residue Asn198 is glycosylated (N-linked (GlcNAc...) asparagine). The chain crosses the membrane as a helical span at residues 222 to 242; the sequence is FLYHIGGFLLPMLVMGWCYVG. Residues 243-261 lie on the Cytoplasmic side of the membrane; sequence VVHRLLQAQRRPQRQKAVR. Residues 262 to 282 traverse the membrane as a helical segment; the sequence is VAILVTSIFFLCWSPYHIVIF. Residues 283–306 are Extracellular-facing; that stretch reads LDTLERLKAVNSSCELSGYLSVAI. A helical transmembrane segment spans residues 307–327; the sequence is TLCEFLGLAHCCLNPMLYTFA. At 328 to 374 the chain is on the cytoplasmic side; sequence GVKFRSDLSRLLTKLGCAGPASLCQLFPNWRKSSLSESENATSLTTF.

It belongs to the G-protein coupled receptor 1 family. As to expression, mainly in spleen, in resting B-cells.

It localises to the cell membrane. Functionally, cytokine receptor that binds to B-lymphocyte chemoattractant (BLC). Involved in B-cell migration into B-cell follicles of spleen and Peyer patches but not into those of mesenteric or peripheral lymph nodes. The sequence is that of C-X-C chemokine receptor type 5 (Cxcr5) from Mus musculus (Mouse).